Reading from the N-terminus, the 154-residue chain is Protein MGF 300-2R (154 aa).

The protein belongs to the asfivirus MGF 300 family.

In terms of biological role, plays a role in virus cell tropism, and may be required for efficient virus replication in macrophages. This Ornithodoros (relapsing fever ticks) protein is Protein MGF 300-2R.